The chain runs to 528 residues: Tyrosine--tRNA ligase, cytoplasmic (528 aa).

Residue Tyr39 participates in L-tyrosine binding. Residues 44-52 carry the 'HIGH' region motif; sequence TTGKPHVAY. Residues Tyr166, Gln170, Asp173, and Gln188 each coordinate L-tyrosine. Residues 222 to 226 carry the 'KMSKS' region motif; sequence KMSSS. A Nuclear localization signal motif is present at residues 242–247; the sequence is KKKLKK. Positions 332–362 are disordered; the sequence is EMKKLSNDAYPDASKQKSVPKGSTKNSGTEE. The 105-residue stretch at 364–468 folds into the tRNA-binding domain; sequence DPSLLDLRVG…SGSAPGERIY (105 aa).

It belongs to the class-I aminoacyl-tRNA synthetase family. Homodimer.

It localises to the cytoplasm. The protein localises to the nucleus. The enzyme catalyses tRNA(Tyr) + L-tyrosine + ATP = L-tyrosyl-tRNA(Tyr) + AMP + diphosphate + H(+). Functionally, catalyzes the attachment of tyrosine to tRNA(Tyr) in a two-step reaction: tyrosine is first activated by ATP to form Tyr-AMP and then transferred to the acceptor end of tRNA(Tyr). This chain is Tyrosine--tRNA ligase, cytoplasmic (yars1), found in Xenopus laevis (African clawed frog).